The primary structure comprises 844 residues: Receptor-like protein 49 (844 aa).

A signal peptide spans 1–31 (MMYSCRERRMITVKWSLCLIFCLSNSILVFA). The Extracellular portion of the chain corresponds to 32–803 (KHLCLPDQRD…QDEEKEEEEQ (772 aa)). N-linked (GlcNAc...) asparagine glycosylation is found at N59, N95, N112, and N159. LRR repeat units lie at residues 102-126 (QHLQ…GLKG), 136-160 (LKYL…LGNL), 161-183 (SYLT…SMGN), 185-208 (NYLR…LGNL), 209-231 (SYLA…SMGN), 242-265 (LNSL…NMSS), 266-290 (LSKL…LFMI), 292-313 (SLVE…NISS), 315-339 (SKLQ…IFSP), 345-362 (YLDV…VSLP), 363-385 (SPIE…LRNQ), 386-409 (TKLY…LWSL), 410-434 (PELQ…VIQG), 436-457 (GELY…LLPV), 458-481 (DSMN…ICEL), 482-504 (DNLV…CFEN), 506-527 (HLYV…EAIS), 528-551 (DRLQ…LINC), 553-574 (ALEF…WLEL), 575-601 (LPNF…SLSF), 602-625 (PRLR…YFAP), 665-689 (FTIY…ISLL), 690-713 (KELI…LSNL), 714-737 (SNLQ…LGEL), and 739-762 (FLAR…QIQT). N207 is a glycosylation site (N-linked (GlcNAc...) asparagine). An N-linked (GlcNAc...) asparagine glycan is attached at N262. N310 carries N-linked (GlcNAc...) asparagine glycosylation. N-linked (GlcNAc...) asparagine glycosylation is found at N374 and N384. A glycan (N-linked (GlcNAc...) asparagine) is linked at N416. N-linked (GlcNAc...) asparagine glycans are attached at residues N493, N516, and N550. N696 and N712 each carry an N-linked (GlcNAc...) asparagine glycan. N744 carries N-linked (GlcNAc...) asparagine glycosylation. A helical transmembrane segment spans residues 804-824 (VFSWIAAAIGYVPGVVCGLTI). Residues 825–844 (GHILVSHKRDWFMRIVSLFT) lie on the Cytoplasmic side of the membrane.

It belongs to the RLP family.

The protein localises to the cell membrane. The chain is Receptor-like protein 49 from Arabidopsis thaliana (Mouse-ear cress).